A 368-amino-acid chain; its full sequence is N-acetylneuraminate epimerase (368 aa).

The signal sequence occupies residues 1-19; the sequence is MNKTIMALAIMMASFAANA. 7 Kelch repeats span residues 40 to 84, 86 to 137, 139 to 173, 174 to 219, 222 to 265, 287 to 336, and 338 to 367; these read TVYI…AFID, NLYV…FVHN, KAYVTGGVNQNIFNGYFEDLNEAGKDSTAIDKINA, HYFD…VNKG, TWLI…VAGG, ENYQ…PWNN, and LLIIGGETAGGKAVTDSVLISVKDNKVTVQ. Glu-228 functions as the Proton acceptor in the catalytic mechanism.

This sequence belongs to the NanM family. As to quaternary structure, homodimer.

It localises to the periplasm. The enzyme catalyses N-acetyl-alpha-neuraminate = N-acetyl-beta-neuraminate. In terms of biological role, converts alpha-N-acetylneuranimic acid (Neu5Ac) to the beta-anomer, accelerating the equilibrium between the alpha- and beta-anomers. Probably facilitates sialidase-negative bacteria to compete successfully for limited amounts of extracellular Neu5Ac, which is likely taken up in the beta-anomer. In addition, the rapid removal of sialic acid from solution might be advantageous to the bacterium to damp down host responses. This chain is N-acetylneuraminate epimerase, found in Shigella flexneri serotype 5b (strain 8401).